We begin with the raw amino-acid sequence, 275 residues long: Phosphonoacetaldehyde hydrolase (275 aa).

Asp15 functions as the Nucleophile in the catalytic mechanism. Mg(2+) is bound by residues Asp15 and Ala17. The Schiff-base intermediate with substrate role is filled by Lys56. Residue Asp189 coordinates Mg(2+).

This sequence belongs to the HAD-like hydrolase superfamily. PhnX family. Homodimer. Requires Mg(2+) as cofactor.

It carries out the reaction phosphonoacetaldehyde + H2O = acetaldehyde + phosphate + H(+). In terms of biological role, involved in phosphonate degradation. This is Phosphonoacetaldehyde hydrolase from Pseudomonas paraeruginosa (strain DSM 24068 / PA7) (Pseudomonas aeruginosa (strain PA7)).